The sequence spans 170 residues: NADH-quinone oxidoreductase subunit B (170 aa).

C42, C43, C107, and C136 together coordinate [4Fe-4S] cluster.

The protein belongs to the complex I 20 kDa subunit family. NDH-1 is composed of 14 different subunits. Subunits NuoB, C, D, E, F, and G constitute the peripheral sector of the complex. [4Fe-4S] cluster is required as a cofactor.

It localises to the cell inner membrane. It catalyses the reaction a quinone + NADH + 5 H(+)(in) = a quinol + NAD(+) + 4 H(+)(out). In terms of biological role, NDH-1 shuttles electrons from NADH, via FMN and iron-sulfur (Fe-S) centers, to quinones in the respiratory chain. The immediate electron acceptor for the enzyme in this species is believed to be ubiquinone. Couples the redox reaction to proton translocation (for every two electrons transferred, four hydrogen ions are translocated across the cytoplasmic membrane), and thus conserves the redox energy in a proton gradient. In Campylobacter curvus (strain 525.92), this protein is NADH-quinone oxidoreductase subunit B.